A 271-amino-acid chain; its full sequence is 3-methyl-2-oxobutanoate hydroxymethyltransferase (271 aa).

The Mg(2+) site is built by aspartate 49 and aspartate 88. 3-methyl-2-oxobutanoate-binding positions include 49–50, aspartate 88, and lysine 118; that span reads DS. Glutamate 120 serves as a coordination point for Mg(2+). The active-site Proton acceptor is the glutamate 187.

The protein belongs to the PanB family. In terms of assembly, homodecamer; pentamer of dimers. It depends on Mg(2+) as a cofactor.

It is found in the cytoplasm. It carries out the reaction 3-methyl-2-oxobutanoate + (6R)-5,10-methylene-5,6,7,8-tetrahydrofolate + H2O = 2-dehydropantoate + (6S)-5,6,7,8-tetrahydrofolate. Its pathway is cofactor biosynthesis; (R)-pantothenate biosynthesis; (R)-pantoate from 3-methyl-2-oxobutanoate: step 1/2. Catalyzes the reversible reaction in which hydroxymethyl group from 5,10-methylenetetrahydrofolate is transferred onto alpha-ketoisovalerate to form ketopantoate. The chain is 3-methyl-2-oxobutanoate hydroxymethyltransferase from Bartonella tribocorum (strain CIP 105476 / IBS 506).